The sequence spans 652 residues: Large subunit GTPase 1 homolog (652 aa).

The residue at position 93 (Ser93) is a Phosphoserine. A CP-type G domain is found at 164–438; it reads WRQLWRVIER…LCDCPGLVMP (275 aa). Position 212-215 (212-215) interacts with GTP; it reads NKAD. The residue at position 252 (Ser252) is a Phosphoserine. The tract at residues 288–347 is disordered; that stretch reads LGEAASSEEDESEYEDCQEEEEDWQTCLEDSSSSDEEACGQDCKEGHTVDSEAQGRNTPQ. Acidic residues predominate over residues 293-311; that stretch reads SSEEDESEYEDCQEEEEDW. Residues 387 to 394 and 431 to 434 contribute to the GTP site; these read GYPNVGKS and DCPG. The disordered stretch occupies residues 625-652; the sequence is RGAGKPWKKHGNRNKKEKSRRLYKHLDM. Over residues 630–652 the composition is skewed to basic residues; it reads PWKKHGNRNKKEKSRRLYKHLDM.

Belongs to the TRAFAC class YlqF/YawG GTPase family. LSG1 subfamily.

It is found in the cytoplasm. Its subcellular location is the endoplasmic reticulum. The protein localises to the nucleus. The protein resides in the cajal body. The enzyme catalyses GTP + H2O = GDP + phosphate + H(+). Its function is as follows. Functions as a GTPase. May act by mediating the release of NMD3 from the 60S ribosomal subunit after export into the cytoplasm during the 60S ribosomal subunit maturation. The protein is Large subunit GTPase 1 homolog of Bos taurus (Bovine).